Consider the following 263-residue polypeptide: Ubiquitin domain-containing protein 7SL RNA2 (263 aa).

Positions 1-53 (MNVDIDTETGSSFSITIDFGETVLQIKEKIEKSQGIPVSKQILYLDGKALEDD) constitute a Ubiquitin-like 1 domain. A disordered region spans residues 74-93 (ADPNQSNEQTEQSKQIDDKK). A compositionally biased stretch (polar residues) spans 76–86 (PNQSNEQTEQS). The Ubiquitin-like 2 domain maps to 184-263 (FTVHVKPYQE…GDTIELIREK (80 aa)).

The protein belongs to the ubiquitin family. As to expression, expressed in seedlings, roots, stems, rosettes and flowers (at protein level).

The protein resides in the nucleus. In terms of biological role, controls phase transition from the vegetative to the reproductive state. Involved in the maintenance of the shoot apical meristem (SAM) thus preventing inflorescence meristem (IM) formation and subsequent inflorescence stem development during flowering. Regulates leaf and organ morphology. The polypeptide is Ubiquitin domain-containing protein 7SL RNA2 (Arabidopsis thaliana (Mouse-ear cress)).